Here is a 199-residue protein sequence, read N- to C-terminus: N-(5'-phosphoribosyl)anthranilate isomerase (199 aa).

This sequence belongs to the TrpF family.

The catalysed reaction is N-(5-phospho-beta-D-ribosyl)anthranilate = 1-(2-carboxyphenylamino)-1-deoxy-D-ribulose 5-phosphate. The protein operates within amino-acid biosynthesis; L-tryptophan biosynthesis; L-tryptophan from chorismate: step 3/5. This chain is N-(5'-phosphoribosyl)anthranilate isomerase, found in Lacticaseibacillus paracasei (strain ATCC 334 / BCRC 17002 / CCUG 31169 / CIP 107868 / KCTC 3260 / NRRL B-441) (Lactobacillus paracasei).